A 330-amino-acid polypeptide reads, in one-letter code: 4,5-dihydroxyphthalate decarboxylase (330 aa).

It to P.putida DHP decarboxylase.

The catalysed reaction is 4,5-dihydroxyphthalate + H(+) = 3,4-dihydroxybenzoate + CO2. Its pathway is xenobiotic degradation; phthalate degradation; 3,4-dihydroxybenzoate from phthalate: step 3/3. The polypeptide is 4,5-dihydroxyphthalate decarboxylase (phtD) (Comamonas testosteroni (Pseudomonas testosteroni)).